We begin with the raw amino-acid sequence, 227 residues long: Ribosomal RNA large subunit methyltransferase E (227 aa).

Glycine 78, tryptophan 80, aspartate 103, aspartate 119, and aspartate 143 together coordinate S-adenosyl-L-methionine. The active-site Proton acceptor is lysine 183.

The protein belongs to the class I-like SAM-binding methyltransferase superfamily. RNA methyltransferase RlmE family.

The protein localises to the cytoplasm. It catalyses the reaction uridine(2552) in 23S rRNA + S-adenosyl-L-methionine = 2'-O-methyluridine(2552) in 23S rRNA + S-adenosyl-L-homocysteine + H(+). Specifically methylates the uridine in position 2552 of 23S rRNA at the 2'-O position of the ribose in the fully assembled 50S ribosomal subunit. In Rickettsia rickettsii (strain Iowa), this protein is Ribosomal RNA large subunit methyltransferase E.